The chain runs to 1382 residues: DNA-directed RNA polymerase subunit beta'' (1382 aa).

C224, C294, C301, and C304 together coordinate Zn(2+).

It belongs to the RNA polymerase beta' chain family. RpoC2 subfamily. In terms of assembly, in plastids the minimal PEP RNA polymerase catalytic core is composed of four subunits: alpha, beta, beta', and beta''. When a (nuclear-encoded) sigma factor is associated with the core the holoenzyme is formed, which can initiate transcription. Zn(2+) serves as cofactor.

The protein localises to the plastid. The protein resides in the chloroplast. The enzyme catalyses RNA(n) + a ribonucleoside 5'-triphosphate = RNA(n+1) + diphosphate. Its function is as follows. DNA-dependent RNA polymerase catalyzes the transcription of DNA into RNA using the four ribonucleoside triphosphates as substrates. In Dioscorea elephantipes (Elephant's foot yam), this protein is DNA-directed RNA polymerase subunit beta''.